We begin with the raw amino-acid sequence, 432 residues long: Adenylosuccinate synthetase (432 aa).

GTP is bound by residues 13–19 and 41–43; these read GDEGKGK and GHT. The active-site Proton acceptor is D14. 2 residues coordinate Mg(2+): D14 and G41. Residues 14-17, 39-42, T130, R144, Q225, T240, and R304 contribute to the IMP site; these read DEGK and NAGH. The active-site Proton donor is the H42. 300–306 serves as a coordination point for substrate; it reads AVTGRPR. GTP is bound by residues R306, 332-334, and 415-417; these read KLD and STG.

The protein belongs to the adenylosuccinate synthetase family. Homodimer. The cofactor is Mg(2+).

The protein localises to the cytoplasm. The catalysed reaction is IMP + L-aspartate + GTP = N(6)-(1,2-dicarboxyethyl)-AMP + GDP + phosphate + 2 H(+). It participates in purine metabolism; AMP biosynthesis via de novo pathway; AMP from IMP: step 1/2. Functionally, plays an important role in the de novo pathway of purine nucleotide biosynthesis. Catalyzes the first committed step in the biosynthesis of AMP from IMP. The polypeptide is Adenylosuccinate synthetase (Histophilus somni (strain 2336) (Haemophilus somnus)).